A 679-amino-acid chain; its full sequence is Dihydroxyacetone phosphate acyltransferase (679 aa).

S11 bears the Phosphoserine mark. An HXXXXD motif motif is present at residues 161–166; sequence HRSYID. K642 is subject to N6-acetyllysine.

It belongs to the GPAT/DAPAT family. As to quaternary structure, part of a heterotrimeric complex composed of GNPAT, AGPS and a modified form of GNPAT.

It is found in the peroxisome membrane. It catalyses the reaction dihydroxyacetone phosphate + an acyl-CoA = a 1-acylglycerone 3-phosphate + CoA. It carries out the reaction dihydroxyacetone phosphate + hexadecanoyl-CoA = 1-hexadecanoylglycerone 3-phosphate + CoA. Its pathway is membrane lipid metabolism; glycerophospholipid metabolism. Functionally, dihydroxyacetonephosphate acyltransferase catalyzing the first step in the biosynthesis of plasmalogens, a subset of phospholipids that differ from other glycerolipids by having an alkyl chain attached through a vinyl ether linkage at the sn-1 position of the glycerol backbone, and which unique physical properties have an impact on various aspects of cell signaling and membrane biology. This chain is Dihydroxyacetone phosphate acyltransferase, found in Oryctolagus cuniculus (Rabbit).